A 519-amino-acid chain; its full sequence is Dideacetyl fusicoccin A C-19 hydroxylase (519 aa).

A helical transmembrane segment spans residues 16 to 36 (LPVAPILFTALAATIGAFLLS). 4 N-linked (GlcNAc...) asparagine glycosylation sites follow: N177, N327, N414, and N432. Position 454 (C454) interacts with heme.

The protein belongs to the cytochrome P450 family. The cofactor is heme.

It localises to the membrane. It participates in mycotoxin biosynthesis. Its function is as follows. Cytochrome P450 monooxygenase; part of the 2 gene clusters that mediate the biosynthesis of fusicoccins, diterpene glucosides that display phytohormone-like activity and function as potent activators of plasma membrane H(+)-ATPases in plants by modifying 14-3-3 proteins and cause the plant disease constriction canker. The first step in the pathway is performed by the fusicoccadiene synthase PaFS that possesses both prenyl transferase and terpene cyclase activity, converting isopentenyl diphosphate and dimethylallyl diphosphate into geranylgeranyl diphosphate (GGDP) and successively converting GGDP into fusicocca-2,10(14)-diene, a precursor for fusicoccin H. The second step is the oxidation at the C-8 position by the cytochrome P450 monooxygenase PaP450-2 to yield fusicocca-2,10(14)-diene-8-beta-ol. The cytochrome P450 monooxygenase PaP450-1 then catalyzes the hydroxylation at the C-16 position to produce fusicocca-2,10(14)-diene-8-beta,16-diol. The dioxygenase fc-dox then catalyzes the 16-oxydation of fusicocca-2,10(14)-diene-8-beta,16-diol to yield an aldehyde (8-beta-hydroxyfusicocca-1,10(14)-dien-16-al). The short-chain dehydrogenase/reductase fc-sdr catalyzes the reduction of the aldehyde to yield fusicocca-1,10(14)-diene-8-beta,16-diol. The next step is the hydroxylation at C-9 performed by the cytochrome P450 monooxygenase PaP450-3 that leads to fusicoccin H aglycon which is glycosylated to fusicoccin H by the O-glycosyltransferase PaGT. Hydroxylation at C-12 by the cytochrome P450 monooxygenase PaP450-4 leads then to the production of fusicoccin Q and is followed by methylation by the O-methyltransferase PaMT to yield fusicoccin P. Fusicoccin P is further converted to fusicoccin J via prenylation by the O-glucose prenyltransferase PaPT. Cytochrome P450 monooxygenase PaP450-5 then performs hydroxylation at C-19 to yield dideacetyl-fusicoccin A which is acetylated to 3'-O-deacetyl-fusicoccin A by the O-acetyltransferase PaAT-2. Finally, a another acetylation by the O-acetyltransferase PaAT-1 yields fusicoccin A. This Phomopsis amygdali (Fusicoccum amygdali) protein is Dideacetyl fusicoccin A C-19 hydroxylase.